The chain runs to 667 residues: Acetolactate synthase 1, chloroplastic (667 aa).

Residues 1 to 35 (MAAAAPSPSSSAFSKTLSPSSSTSSTLLPRSTFPF) are compositionally biased toward low complexity. The segment at 1-45 (MAAAAPSPSSSAFSKTLSPSSSTSSTLLPRSTFPFPHHPHKTTPP) is disordered. The transit peptide at 1–94 (MAAAAPSPSS…VSRFAPDEPR (94 aa)) directs the protein to the chloroplast. Glutamate 141 provides a ligand contact to thiamine diphosphate. A disulfide bridge connects residues cysteine 161 and cysteine 307. FAD-binding positions include arginine 243, 349 to 370 (HGTVYANYAVDSSDLLLAFGVR), and 392 to 411 (DIDSAEIGKNKQPHVSICAD). The thiamine pyrophosphate binding stretch occupies residues 484–564 (QHQMWAAQYY…VKIMLLNNQH (81 aa)). Mg(2+) contacts are provided by aspartate 535 and asparagine 562.

Belongs to the TPP enzyme family. It depends on Mg(2+) as a cofactor. Requires thiamine diphosphate as cofactor.

It is found in the plastid. It localises to the chloroplast. The catalysed reaction is 2 pyruvate + H(+) = (2S)-2-acetolactate + CO2. It participates in amino-acid biosynthesis; L-isoleucine biosynthesis; L-isoleucine from 2-oxobutanoate: step 1/4. It functions in the pathway amino-acid biosynthesis; L-valine biosynthesis; L-valine from pyruvate: step 1/4. The protein is Acetolactate synthase 1, chloroplastic (ALS SURA) of Nicotiana tabacum (Common tobacco).